Reading from the N-terminus, the 142-residue chain is Cellulose/chitin binding protein BQ2027_MB2009 (142 aa).

The N-terminal stretch at 1 to 37 is a signal peptide; that stretch reads MAGLNIYVRRWRTALHATVSALIVAILGLAITPVASA. The 105-residue stretch at 38–142 folds into the CBM2 domain; it reads ATARATLSVT…CLLNGQYPCT (105 aa).

Its subcellular location is the secreted. The protein localises to the cell wall. It localises to the cell membrane. In terms of biological role, carbohydrate binding protein that binds chitin and cellulose. Lacks enzymatic activity and does not hydrolyze chitin and cellulose. May interact with mycobacterial biofilms, which are rich in cellulose, and play a role in biofilm formation. Could also act as an adhesin, improving the initial attachment to host cells and aiding M.bovis during the initial stages of infection. Its function is as follows. May act as a virulence factor that modulates host immune responses and contributes to host immune evasion. In Mycobacterium bovis (strain ATCC BAA-935 / AF2122/97), this protein is Cellulose/chitin binding protein BQ2027_MB2009.